Here is a 105-residue protein sequence, read N- to C-terminus: Insulin-like peptide 7 (105 aa).

Residues 1 to 18 (MPPIILVFFLVLIPASQQ) form the signal peptide. Positions 19–57 (YPFSLESLNDQIINEEVIEYMLENSIRSSRTRRVPDEKK) are excised as a propeptide. Cystine bridges form between C61–C90, C73–C103, C77–C104, and C89–C94.

This sequence belongs to the insulin family.

It localises to the secreted. Insulin-like peptide which plays a role in ageing as a consequence of daf-16 activity. The polypeptide is Insulin-like peptide 7 (Caenorhabditis elegans).